The primary structure comprises 502 residues: Lysine--tRNA ligase (502 aa).

Residues Glu398 and Glu405 each contribute to the Mg(2+) site.

The protein belongs to the class-II aminoacyl-tRNA synthetase family. In terms of assembly, homodimer. Mg(2+) serves as cofactor.

It is found in the cytoplasm. The enzyme catalyses tRNA(Lys) + L-lysine + ATP = L-lysyl-tRNA(Lys) + AMP + diphosphate. This is Lysine--tRNA ligase from Thermosipho melanesiensis (strain DSM 12029 / CIP 104789 / BI429).